The following is a 124-amino-acid chain: Small ribosomal subunit protein bS6 (124 aa).

The disordered stretch occupies residues 96–124 (ETGPSPMMKEVQREEAKKAAAAQPTEAQA). The span at 114-124 (AAAAQPTEAQA) shows a compositional bias: low complexity.

Belongs to the bacterial ribosomal protein bS6 family.

Functionally, binds together with bS18 to 16S ribosomal RNA. The protein is Small ribosomal subunit protein bS6 of Burkholderia mallei (strain ATCC 23344).